Reading from the N-terminus, the 142-residue chain is Large ribosomal subunit protein uL11 (142 aa).

It belongs to the universal ribosomal protein uL11 family. As to quaternary structure, part of the ribosomal stalk of the 50S ribosomal subunit. Interacts with L10 and the large rRNA to form the base of the stalk. L10 forms an elongated spine to which L12 dimers bind in a sequential fashion forming a multimeric L10(L12)X complex. One or more lysine residues are methylated.

Functionally, forms part of the ribosomal stalk which helps the ribosome interact with GTP-bound translation factors. This chain is Large ribosomal subunit protein uL11, found in Shigella boydii serotype 18 (strain CDC 3083-94 / BS512).